A 514-amino-acid chain; its full sequence is Cytochrome P450 monooxygenase verB (514 aa).

The helical transmembrane segment at 5–25 (WLSASVLITAVILLVDYLNYY) threads the bilayer. Residue Cys457 participates in heme binding.

It belongs to the cytochrome P450 family. It depends on heme as a cofactor.

It localises to the membrane. Its pathway is mycotoxin biosynthesis. Cytochrome P450 monooxygenase; part of the gene cluster that mediates the biosynthesis of 11'-deoxyverticillin A, one of the dimeric epipolythiodioxopiperazines (ETPs) from the verticillin family that act as mycotoxins. 11'-deoxyverticillin A is required for normal conidiation. The nonribosomal peptide synthetase verP is speculated to be responsible for condensation of amino acids to form the carbon skeleton of verticillin, whereas the cluster-specific tailoring enzymes are involved in further modifications leading to the production of 11'-deoxyverticillin A. This is Cytochrome P450 monooxygenase verB from Clonostachys rogersoniana.